The sequence spans 392 residues: Protein-glutamate methylesterase/protein-glutamine glutaminase (392 aa).

Positions 9–126 constitute a Response regulatory domain; sequence TVLIVDDSPF…GADIQALARD (118 aa). D60 is subject to 4-aspartylphosphate. Residues 148-194 are disordered; that stretch reads VSRISSASGSRPPWTAGAASENTNRLSSPGSTSSTLGSAKGRSLDSG. Residues 173–185 are compositionally biased toward low complexity; the sequence is LSSPGSTSSTLGS. The 195-residue stretch at 198–392 folds into the CheB-type methylesterase domain; it reads PKYPVEIVAI…RHIVECVQRR (195 aa). Residues S210, H237, and D334 contribute to the active site.

This sequence belongs to the CheB family. In terms of processing, phosphorylated by CheA. Phosphorylation of the N-terminal regulatory domain activates the methylesterase activity.

Its subcellular location is the cytoplasm. It carries out the reaction [protein]-L-glutamate 5-O-methyl ester + H2O = L-glutamyl-[protein] + methanol + H(+). It catalyses the reaction L-glutaminyl-[protein] + H2O = L-glutamyl-[protein] + NH4(+). In terms of biological role, involved in chemotaxis. Part of a chemotaxis signal transduction system that modulates chemotaxis in response to various stimuli. Catalyzes the demethylation of specific methylglutamate residues introduced into the chemoreceptors (methyl-accepting chemotaxis proteins or MCP) by CheR. Also mediates the irreversible deamidation of specific glutamine residues to glutamic acid. In Desulfitobacterium hafniense (strain Y51), this protein is Protein-glutamate methylesterase/protein-glutamine glutaminase.